Here is a 170-residue protein sequence, read N- to C-terminus: MMQILLLALAVSLACADSIDYSKVPGNWRTIAIAADHVEKIEVNGELRAYFRQVDCTEGCDKISITFYTNTDGVCTEHTVVGARNGENDVYTVDYAGENTFQILCNSDDAFVIGSVNTDQNGQTTKEVAIAAKRNFLTPEQEQKFQKAVQNAGIPLENIRYVIETDTCPD.

Residues 1–16 (MMQILLLALAVSLACA) form the signal peptide. Cystine bridges form between Cys56–Cys60 and Cys75–Cys168.

This sequence belongs to the calycin superfamily. Lipocalin family. Post-translationally, not N-linked glycosylated. Expressed in harderian gland (at protein level). Expressed in hair (at protein level). Expressed in submaxillary gland and harderian gland.

Its subcellular location is the secreted. The sequence is that of Lipocalin Cav p 2.0101 (Lcncavp2) from Cavia porcellus (Guinea pig).